A 108-amino-acid polypeptide reads, in one-letter code: MTEDFTPNAGYIEVKPPARPRQNIAKDNQQMRLALLRVKRYETAVQRLQEEQDRERQTARQAGRDLIKYTTSVKDHAVPELWGYLPPEKNPYALYEEENKTTGCCVIS.

Cysteine 104 carries the S-palmitoyl cysteine lipid modification. Residue cysteine 105 is modified to Cysteine methyl ester. The S-farnesyl cysteine moiety is linked to residue cysteine 105. Positions 106 to 108 (VIS) are cleaved as a propeptide — removed in mature form.

It belongs to the G protein gamma family. As to quaternary structure, g proteins are composed of 3 units, alpha, beta and gamma.

It is found in the membrane. In Yarrowia lipolytica (strain CLIB 122 / E 150) (Yeast), this protein is Guanine nucleotide-binding protein subunit gamma.